The sequence spans 449 residues: Hyaluronidase-1 (449 aa).

A signal peptide spans 1-23; the sequence is MYHIWIKFLAAWIFLKRFNGVHV. 2 cysteine pairs are disulfide-bonded: Cys-47–Cys-340 and Cys-211–Cys-227. Residues Asn-67, Asn-103, and Asn-111 are each glycosylated (N-linked (GlcNAc...) asparagine). The Proton donor role is filled by Glu-135. The N-linked (GlcNAc...) asparagine glycan is linked to Asn-153. Asn-357 carries N-linked (GlcNAc...) asparagine glycosylation. Disulfide bonds link Cys-365–Cys-376, Cys-370–Cys-427, and Cys-429–Cys-438. Residue Asn-401 is glycosylated (N-linked (GlcNAc...) asparagine). The EGF-like domain maps to 427-438; it reads CQCYQGWKGLYC.

Belongs to the glycosyl hydrolase 56 family. Monomer. Expressed by the venom gland.

The protein resides in the secreted. It carries out the reaction Random hydrolysis of (1-&gt;4)-linkages between N-acetyl-beta-D-glucosamine and D-glucuronate residues in hyaluronate.. Snake venom endo-hyaluronidase that degrades hyaluronan to smaller oligosaccharide fragments. In venom, it is not toxic by itself, but increases the diffusion of other venom proteins by degrading the extracellular matrix. In addition, it displays antiedematogenic activity. This is Hyaluronidase-1 from Cerastes cerastes (Horned desert viper).